The primary structure comprises 277 residues: Large ribosomal subunit protein uL2 (277 aa).

Disordered stretches follow at residues 36–55 (PLPKRAGRNNQGKLTVRHHG) and 213–277 (WKGI…RKKK).

This sequence belongs to the universal ribosomal protein uL2 family. Part of the 50S ribosomal subunit. Forms a bridge to the 30S subunit in the 70S ribosome.

Its function is as follows. One of the primary rRNA binding proteins. Required for association of the 30S and 50S subunits to form the 70S ribosome, for tRNA binding and peptide bond formation. It has been suggested to have peptidyltransferase activity; this is somewhat controversial. Makes several contacts with the 16S rRNA in the 70S ribosome. The sequence is that of Large ribosomal subunit protein uL2 from Staphylococcus saprophyticus subsp. saprophyticus (strain ATCC 15305 / DSM 20229 / NCIMB 8711 / NCTC 7292 / S-41).